We begin with the raw amino-acid sequence, 361 residues long: Polygalacturonase (361 aa).

An N-terminal signal peptide occupies residues M1–A18. A disulfide bond links C27 and C43. PbH1 repeat units lie at residues C155–S185, S186–S207, G208–S228, V237–T258, and V266–G288. Residue D200 is the Proton donor of the active site. C202 and C218 are joined by a disulfide. H222 is a catalytic residue. N-linked (GlcNAc...) asparagine glycosylation is found at N318 and N330. A disulfide bridge links C350 with C361.

The protein belongs to the glycosyl hydrolase 28 family.

The catalysed reaction is (1,4-alpha-D-galacturonosyl)n+m + H2O = (1,4-alpha-D-galacturonosyl)n + (1,4-alpha-D-galacturonosyl)m.. The sequence is that of Polygalacturonase (PGU1) from Saccharomyces cerevisiae (strain ATCC 204508 / S288c) (Baker's yeast).